We begin with the raw amino-acid sequence, 472 residues long: 3-isopropylmalate dehydratase large subunit (472 aa).

Cysteine 351, cysteine 412, and cysteine 415 together coordinate [4Fe-4S] cluster.

Belongs to the aconitase/IPM isomerase family. LeuC type 1 subfamily. Heterodimer of LeuC and LeuD. It depends on [4Fe-4S] cluster as a cofactor.

It catalyses the reaction (2R,3S)-3-isopropylmalate = (2S)-2-isopropylmalate. It functions in the pathway amino-acid biosynthesis; L-leucine biosynthesis; L-leucine from 3-methyl-2-oxobutanoate: step 2/4. Catalyzes the isomerization between 2-isopropylmalate and 3-isopropylmalate, via the formation of 2-isopropylmaleate. The protein is 3-isopropylmalate dehydratase large subunit of Marinobacter nauticus (strain ATCC 700491 / DSM 11845 / VT8) (Marinobacter aquaeolei).